The following is a 334-amino-acid chain: Anthranilate phosphoribosyltransferase (334 aa).

5-phospho-alpha-D-ribose 1-diphosphate contacts are provided by residues G79, 82-83 (GD), S87, 89-92 (NIST), 107-115 (KHGNRSISS), and S119. Residue G79 participates in anthranilate binding. S91 provides a ligand contact to Mg(2+). Position 110 (N110) interacts with anthranilate. Residue R165 coordinates anthranilate. Positions 224 and 225 each coordinate Mg(2+).

Belongs to the anthranilate phosphoribosyltransferase family. In terms of assembly, homodimer. It depends on Mg(2+) as a cofactor.

The enzyme catalyses N-(5-phospho-beta-D-ribosyl)anthranilate + diphosphate = 5-phospho-alpha-D-ribose 1-diphosphate + anthranilate. The protein operates within amino-acid biosynthesis; L-tryptophan biosynthesis; L-tryptophan from chorismate: step 2/5. In terms of biological role, catalyzes the transfer of the phosphoribosyl group of 5-phosphorylribose-1-pyrophosphate (PRPP) to anthranilate to yield N-(5'-phosphoribosyl)-anthranilate (PRA). This Streptococcus gordonii (strain Challis / ATCC 35105 / BCRC 15272 / CH1 / DL1 / V288) protein is Anthranilate phosphoribosyltransferase.